The following is a 201-amino-acid chain: MSYVPIVVEPTSRGERAYDIYSRLLKERIIFVCSTVEDHMANLIVAQLLFLEAENPKKDIYMYINSPGGVVTAGLAIYDTMQYIKPKVATLCIGQACSMGSLLLCGGEKGMRYSLPHSRIMIHQPSGGYKGQATDIEIHAQETLKIKRLLNELYSKHTEQELKHIEKSMERDNFMSPEEAKKFGLVDNIMSSRDAMTLLAK.

Catalysis depends on Ser98, which acts as the Nucleophile. The active site involves His123.

This sequence belongs to the peptidase S14 family. In terms of assembly, fourteen ClpP subunits assemble into 2 heptameric rings which stack back to back to give a disk-like structure with a central cavity, resembling the structure of eukaryotic proteasomes.

The protein localises to the cytoplasm. The catalysed reaction is Hydrolysis of proteins to small peptides in the presence of ATP and magnesium. alpha-casein is the usual test substrate. In the absence of ATP, only oligopeptides shorter than five residues are hydrolyzed (such as succinyl-Leu-Tyr-|-NHMec, and Leu-Tyr-Leu-|-Tyr-Trp, in which cleavage of the -Tyr-|-Leu- and -Tyr-|-Trp bonds also occurs).. Cleaves peptides in various proteins in a process that requires ATP hydrolysis. Has a chymotrypsin-like activity. Plays a major role in the degradation of misfolded proteins. The protein is ATP-dependent Clp protease proteolytic subunit of Rickettsia peacockii (strain Rustic).